A 517-amino-acid polypeptide reads, in one-letter code: Mucin-like protein 3 (517 aa).

The signal sequence occupies residues methionine 1–alanine 29. At threonine 30–alanine 448 the chain is on the extracellular side. The disordered stretch occupies residues serine 67–leucine 341. The segment covering glutamine 83–serine 93 has biased composition (basic residues). N-linked (GlcNAc...) asparagine glycosylation is present at asparagine 88. The span at threonine 105–glutamate 116 shows a compositional bias: basic and acidic residues. Residue asparagine 124 is glycosylated (N-linked (GlcNAc...) asparagine). Polar residues predominate over residues arginine 169 to threonine 179. Residues arginine 180–glutamate 190 are compositionally biased toward basic and acidic residues. The span at serine 194–serine 213 shows a compositional bias: low complexity. Polar residues-rich tracts occupy residues glycine 214–phenylalanine 225, alanine 232–proline 243, and threonine 263–alanine 283. Residues threonine 305–lysine 317 are compositionally biased toward basic and acidic residues. Asparagine 338 carries an N-linked (GlcNAc...) asparagine glycan. Residues isoleucine 449–leucine 469 traverse the membrane as a helical segment. Over valine 470–arginine 517 the chain is Cytoplasmic.

As to expression, detected in lung, esophagus, stomach, rectum, skin, cervix, testis, kidney, uterus and small intestine. Expressed in pancreas (at protein level).

It is found in the cell membrane. It localises to the cytoplasm. In terms of biological role, may modulate NF-kappaB signaling and play a role in cell growth. The sequence is that of Mucin-like protein 3 from Homo sapiens (Human).